The chain runs to 1070 residues: DNA-directed RNA polymerase subunit beta (1070 aa).

Belongs to the RNA polymerase beta chain family. In plastids the minimal PEP RNA polymerase catalytic core is composed of four subunits: alpha, beta, beta', and beta''. When a (nuclear-encoded) sigma factor is associated with the core the holoenzyme is formed, which can initiate transcription.

It localises to the plastid. Its subcellular location is the chloroplast. It catalyses the reaction RNA(n) + a ribonucleoside 5'-triphosphate = RNA(n+1) + diphosphate. DNA-dependent RNA polymerase catalyzes the transcription of DNA into RNA using the four ribonucleoside triphosphates as substrates. This is DNA-directed RNA polymerase subunit beta from Silene latifolia (White campion).